The following is a 71-amino-acid chain: Exodeoxyribonuclease 7 small subunit (71 aa).

It belongs to the XseB family. Heterooligomer composed of large and small subunits.

It localises to the cytoplasm. The enzyme catalyses Exonucleolytic cleavage in either 5'- to 3'- or 3'- to 5'-direction to yield nucleoside 5'-phosphates.. In terms of biological role, bidirectionally degrades single-stranded DNA into large acid-insoluble oligonucleotides, which are then degraded further into small acid-soluble oligonucleotides. In Streptococcus thermophilus (strain ATCC BAA-250 / LMG 18311), this protein is Exodeoxyribonuclease 7 small subunit.